Reading from the N-terminus, the 246-residue chain is Pyridoxine 5'-phosphate synthase (246 aa).

Asn-12 lines the 3-amino-2-oxopropyl phosphate pocket. Residue 14 to 15 coordinates 1-deoxy-D-xylulose 5-phosphate; sequence DH. Residue Arg-23 coordinates 3-amino-2-oxopropyl phosphate. The Proton acceptor role is filled by His-48. 1-deoxy-D-xylulose 5-phosphate is bound by residues Arg-50 and His-55. Glu-75 acts as the Proton acceptor in catalysis. Thr-105 lines the 1-deoxy-D-xylulose 5-phosphate pocket. Catalysis depends on His-196, which acts as the Proton donor. 3-amino-2-oxopropyl phosphate is bound by residues Gly-197 and 218-219; that span reads GH.

This sequence belongs to the PNP synthase family. As to quaternary structure, homooctamer; tetramer of dimers.

It localises to the cytoplasm. The enzyme catalyses 3-amino-2-oxopropyl phosphate + 1-deoxy-D-xylulose 5-phosphate = pyridoxine 5'-phosphate + phosphate + 2 H2O + H(+). It participates in cofactor biosynthesis; pyridoxine 5'-phosphate biosynthesis; pyridoxine 5'-phosphate from D-erythrose 4-phosphate: step 5/5. Functionally, catalyzes the complicated ring closure reaction between the two acyclic compounds 1-deoxy-D-xylulose-5-phosphate (DXP) and 3-amino-2-oxopropyl phosphate (1-amino-acetone-3-phosphate or AAP) to form pyridoxine 5'-phosphate (PNP) and inorganic phosphate. The protein is Pyridoxine 5'-phosphate synthase of Nitrosococcus oceani (strain ATCC 19707 / BCRC 17464 / JCM 30415 / NCIMB 11848 / C-107).